Reading from the N-terminus, the 360-residue chain is Malonyl CoA-acyl carrier protein transacylase, mitochondrial (360 aa).

Residues 1-24 (MKLLTFPGQGTSISISILKAIIRN) constitute a mitochondrion transit peptide. Catalysis depends on residues Ser-105 and His-235.

It belongs to the FabD family.

It is found in the mitochondrion. It catalyses the reaction holo-[ACP] + malonyl-CoA = malonyl-[ACP] + CoA. It functions in the pathway lipid metabolism; fatty acid biosynthesis. Involved in biosynthesis of fatty acids in mitochondria. The protein is Malonyl CoA-acyl carrier protein transacylase, mitochondrial (MCT1) of Saccharomyces cerevisiae (strain ATCC 204508 / S288c) (Baker's yeast).